The chain runs to 228 residues: Leucyl/phenylalanyl-tRNA--protein transferase (228 aa).

Belongs to the L/F-transferase family.

The protein resides in the cytoplasm. The enzyme catalyses N-terminal L-lysyl-[protein] + L-leucyl-tRNA(Leu) = N-terminal L-leucyl-L-lysyl-[protein] + tRNA(Leu) + H(+). It catalyses the reaction N-terminal L-arginyl-[protein] + L-leucyl-tRNA(Leu) = N-terminal L-leucyl-L-arginyl-[protein] + tRNA(Leu) + H(+). It carries out the reaction L-phenylalanyl-tRNA(Phe) + an N-terminal L-alpha-aminoacyl-[protein] = an N-terminal L-phenylalanyl-L-alpha-aminoacyl-[protein] + tRNA(Phe). In terms of biological role, functions in the N-end rule pathway of protein degradation where it conjugates Leu, Phe and, less efficiently, Met from aminoacyl-tRNAs to the N-termini of proteins containing an N-terminal arginine or lysine. The protein is Leucyl/phenylalanyl-tRNA--protein transferase of Sulfurimonas denitrificans (strain ATCC 33889 / DSM 1251) (Thiomicrospira denitrificans (strain ATCC 33889 / DSM 1251)).